The chain runs to 213 residues: Thiamine-phosphate synthase (213 aa).

4-amino-2-methyl-5-(diphosphooxymethyl)pyrimidine contacts are provided by residues 38-42 (QLREK) and D70. D71 and E90 together coordinate Mg(2+). S109 contacts 4-amino-2-methyl-5-(diphosphooxymethyl)pyrimidine. 135–137 (TQT) serves as a coordination point for 2-[(2R,5Z)-2-carboxy-4-methylthiazol-5(2H)-ylidene]ethyl phosphate. Residue K138 participates in 4-amino-2-methyl-5-(diphosphooxymethyl)pyrimidine binding. Residues G165 and 185-186 (VS) contribute to the 2-[(2R,5Z)-2-carboxy-4-methylthiazol-5(2H)-ylidene]ethyl phosphate site.

It belongs to the thiamine-phosphate synthase family. Requires Mg(2+) as cofactor.

The catalysed reaction is 2-[(2R,5Z)-2-carboxy-4-methylthiazol-5(2H)-ylidene]ethyl phosphate + 4-amino-2-methyl-5-(diphosphooxymethyl)pyrimidine + 2 H(+) = thiamine phosphate + CO2 + diphosphate. It carries out the reaction 2-(2-carboxy-4-methylthiazol-5-yl)ethyl phosphate + 4-amino-2-methyl-5-(diphosphooxymethyl)pyrimidine + 2 H(+) = thiamine phosphate + CO2 + diphosphate. It catalyses the reaction 4-methyl-5-(2-phosphooxyethyl)-thiazole + 4-amino-2-methyl-5-(diphosphooxymethyl)pyrimidine + H(+) = thiamine phosphate + diphosphate. Its pathway is cofactor biosynthesis; thiamine diphosphate biosynthesis; thiamine phosphate from 4-amino-2-methyl-5-diphosphomethylpyrimidine and 4-methyl-5-(2-phosphoethyl)-thiazole: step 1/1. Functionally, condenses 4-methyl-5-(beta-hydroxyethyl)thiazole monophosphate (THZ-P) and 2-methyl-4-amino-5-hydroxymethyl pyrimidine pyrophosphate (HMP-PP) to form thiamine monophosphate (TMP). The protein is Thiamine-phosphate synthase of Lacticaseibacillus paracasei (strain ATCC 334 / BCRC 17002 / CCUG 31169 / CIP 107868 / KCTC 3260 / NRRL B-441) (Lactobacillus paracasei).